The following is a 691-amino-acid chain: Elongation factor G (691 aa).

Residues 8–282 (HMVRNIGIAA…AVVDYLPAPD (275 aa)) form the tr-type G domain. GTP is bound by residues 17 to 24 (AHIDAGKT), 81 to 85 (DTPGH), and 135 to 138 (NKMD).

This sequence belongs to the TRAFAC class translation factor GTPase superfamily. Classic translation factor GTPase family. EF-G/EF-2 subfamily.

It is found in the cytoplasm. Functionally, catalyzes the GTP-dependent ribosomal translocation step during translation elongation. During this step, the ribosome changes from the pre-translocational (PRE) to the post-translocational (POST) state as the newly formed A-site-bound peptidyl-tRNA and P-site-bound deacylated tRNA move to the P and E sites, respectively. Catalyzes the coordinated movement of the two tRNA molecules, the mRNA and conformational changes in the ribosome. This Campylobacter hominis (strain ATCC BAA-381 / DSM 21671 / CCUG 45161 / LMG 19568 / NCTC 13146 / CH001A) protein is Elongation factor G.